The chain runs to 160 residues: Cytochrome b6-f complex subunit 4 (160 aa).

The next 3 helical transmembrane spans lie at 36 to 56 (LLYLFPVCILGTFACCIGLAV), 95 to 115 (LLGVLAMAAVPAGLITVPFIE), and 131 to 151 (LVFITGFIFAVWFGIGACLPI).

The protein belongs to the cytochrome b family. PetD subfamily. In terms of assembly, the 4 large subunits of the cytochrome b6-f complex are cytochrome b6, subunit IV (17 kDa polypeptide, petD), cytochrome f and the Rieske protein, while the 4 small subunits are petG, petL, petM and petN. The complex functions as a dimer.

The protein localises to the plastid. The protein resides in the chloroplast thylakoid membrane. Functionally, component of the cytochrome b6-f complex, which mediates electron transfer between photosystem II (PSII) and photosystem I (PSI), cyclic electron flow around PSI, and state transitions. This is Cytochrome b6-f complex subunit 4 from Thalassiosira pseudonana (Marine diatom).